The primary structure comprises 558 residues: MFARMSDLHVLLLMVLAGKTAFGLSLLSFLTEPDPDWTPDQYEYSQEYNNQEENASSTTAYSDNPDWYYEEDDPCLSNPCTHGGDCLVSGATFTCRCPDPFSGNRCQNVQNKCKNNPCGRGDCLITQSPPYHRCACKHPYRGSDCSRVVPVCRPNPCQNGGTCSRQRRRSKFTCACPDQFKGKLCEIGPDDCYVDDGYSYRGRVSKTIHQHTCLYWNSHLLLQEKYNMFMEDAEAHGIGEHNFCRNPDGDKKPWCFIKVNNVKVKWEYCDVPACSALDVANPEGRPTEPLTKFPEFGSCGRTEIAEKKVKRIFGGFKSTAGKHPWQASLQTSLRLTVSTPQGHYCGGALIHPCWVLTAAHCTEIKTKYLKVVLGDQDLTKTEFHEQSFGVQKIFKYSHYIEIDDIPYNDIALLKLKPVDGHCALESKYVKTVCLPDGPFLSGTECYISGWGVTETGEGSRHLLDAKVKLISNTICNSRQLYDHSIDDNMICAGNLQKPGQDSCQGDSGGPLTCEKDGTSYIYGIVSWGLECGKRPGVYTQVTKFLTWIKATMEKEASF.

Residues 1-23 (MFARMSDLHVLLLMVLAGKTAFG) form the signal peptide. Residue asparagine 54 is glycosylated (N-linked (GlcNAc...) asparagine). 3 EGF-like domains span residues 71 to 107 (EDDPCLSNPCTHGGDCLVSGATFTCRCPDPFSGNRCQ), 109 to 146 (VQNKCKNNPCGRGDCLITQSPPYHRCACKHPYRGSDCS), and 148 to 186 (VVPVCRPNPCQNGGTCSRQRRRSKFTCACPDQFKGKLCE). Cystine bridges form between cysteine 75–cysteine 86, cysteine 80–cysteine 95, cysteine 97–cysteine 106, cysteine 113–cysteine 123, cysteine 118–cysteine 134, cysteine 136–cysteine 145, cysteine 152–cysteine 163, cysteine 157–cysteine 174, cysteine 176–cysteine 185, cysteine 192–cysteine 274, cysteine 213–cysteine 255, cysteine 244–cysteine 269, cysteine 299–cysteine 433, cysteine 345–cysteine 361, cysteine 353–cysteine 422, cysteine 445–cysteine 513, cysteine 475–cysteine 491, and cysteine 503–cysteine 531. The region spanning 191 to 274 (DCYVDDGYSY…KWEYCDVPAC (84 aa)) is the Kringle domain. The Peptidase S1 domain occupies 312-553 (IFGGFKSTAG…FLTWIKATME (242 aa)). Active-site charge relay system residues include histidine 360 and aspartate 409. Serine 507 acts as the Charge relay system in catalysis.

Belongs to the peptidase S1 family. As to quaternary structure, heterodimer; disulfide-linked. Heterodimer of a 50 kDa heavy and a 27 kDa light chain linked by a disulfide bond. In terms of processing, proteolytic cleavage at Gly-23 or Leu-27 can give rise to the 50 kDa heavy chain (HC) and cleavage at Arg-311 or Lys-317 can give rise to the 27 kDa light chain (LC). The HC can undergo further proteolytic cleavage giving rise to a 26 kDa fragment. The LC can undergo further proteolytic cleavage at Arg-311 leading to a 17-kDa fragment and at Arg-478 leading to a 8-kDa fragment.

It is found in the secreted. Its function is as follows. Cleaves the alpha-chain at multiple sites and the beta-chain between 'Lys-53' and 'Lys-54' but not the gamma-chain of fibrinogen and therefore does not initiate the formation of the fibrin clot and does not cause the fibrinolysis directly. It does not cleave (activate) prothrombin and plasminogen but converts the inactive single chain urinary plasminogen activator (pro-urokinase) to the active two chain form. Activates coagulation factor VII. May function as a tumor suppressor negatively regulating cell proliferation and cell migration. In Bos taurus (Bovine), this protein is Factor VII-activating protease (HABP2).